We begin with the raw amino-acid sequence, 376 residues long: Phytanoyl-CoA hydroxylase-interacting protein-like (376 aa).

Phosphoserine occurs at positions 12 and 15. N23 carries N-linked (GlcNAc...) asparagine glycosylation. S25 is subject to Phosphoserine. N37 carries an N-linked (GlcNAc...) asparagine glycan. Residues 52–161 (VPHNIKISNI…EIIEFCTADY (110 aa)) form the Fibronectin type-III domain.

The protein belongs to the PHYHIP family.

In terms of biological role, may play a role in the development of the central system. The chain is Phytanoyl-CoA hydroxylase-interacting protein-like (PHYHIPL) from Homo sapiens (Human).